The sequence spans 602 residues: Elongation factor 4 (602 aa).

The region spanning 6–188 (DRIRNFCIIA…RIVTRIPPPG (183 aa)) is the tr-type G domain. Residues 18-23 (DHGKST) and 135-138 (NKID) contribute to the GTP site.

The protein belongs to the TRAFAC class translation factor GTPase superfamily. Classic translation factor GTPase family. LepA subfamily.

The protein localises to the cell membrane. The catalysed reaction is GTP + H2O = GDP + phosphate + H(+). Required for accurate and efficient protein synthesis under certain stress conditions. May act as a fidelity factor of the translation reaction, by catalyzing a one-codon backward translocation of tRNAs on improperly translocated ribosomes. Back-translocation proceeds from a post-translocation (POST) complex to a pre-translocation (PRE) complex, thus giving elongation factor G a second chance to translocate the tRNAs correctly. Binds to ribosomes in a GTP-dependent manner. This chain is Elongation factor 4, found in Pelotomaculum thermopropionicum (strain DSM 13744 / JCM 10971 / SI).